The primary structure comprises 121 residues: Met-lysine-1b (121 aa).

Residues 1–22 (MKSFVFALALIVAFACISESKS) form the signal peptide. Residues 23 to 69 (DHTGYEEEENLEDSELTDLVAAALLEELAEASEMDDLSYTEEAGGER) constitute a propeptide that is removed on maturation. Methionine 120 carries the post-translational modification Methionine amide.

In terms of tissue distribution, expressed by the venom gland.

It is found in the secreted. Functionally, shows no antimicrobial activity against Gram-positive bacterium B.subtilis B-501 or Gram-negative bacterium E.coli DH5-alpha at concentrations up to 20 ug/ml. Shows no toxicity towards insect (S.carnaria) larvae. This Lachesana tarabaevi (Spider) protein is Met-lysine-1b.